Reading from the N-terminus, the 410-residue chain is MVASNQSEVNIGMVGHVDHGKTSLTRKLTGVWTDTHSEELKRGISIRLGYADCEIKKCESCNEPECYTVDKKCDCCSGKVETLRKISFVDAPGHETLMATMLSGASLMDGAILVIAASEECPQPQTKEHLMALDALGVKNILIVQNKIDLVTEEQAVENYEQIQKFTKGTVAEKAPIIPVSAHHGANLDVLLKAIQEFIPTPKRDETVSPRLYVARSFDVNKPGSEIKDLKGGVIGGSIIQGILKVGDEIEIRPGSKVVEGNKTKWVPIITKIISLGAGSKKLKTALPGGLIGVGTELDPNLTKSDALSGSLAGIPGTLPETLEKITIRPQLLERVVGSQDELLIEPLKTNEVLMLNVGTSTTVGVTVSAKAEKVEIKLKLPVCADSGDRVAISRKIGSRWRLIGYGIIL.

Residues 6 to 203 (QSEVNIGMVG…AIQEFIPTPK (198 aa)) enclose the tr-type G domain. The G1 stretch occupies residues 15 to 22 (GHVDHGKT). Mg(2+) contacts are provided by Asp-18, Thr-22, Gly-43, and Ser-45. Residue 18–23 (DHGKTS) coordinates GTP. The segment at 43 to 47 (GISIR) is G2. Zn(2+) contacts are provided by Cys-58, Cys-61, Cys-73, and Cys-76. The tract at residues 90 to 93 (DAPG) is G3. GTP-binding positions include 146–149 (NKID) and 181–183 (SAH). A G4 region spans residues 146–149 (NKID). Positions 181 to 183 (SAH) are G5.

The protein belongs to the TRAFAC class translation factor GTPase superfamily. Classic translation factor GTPase family. EIF2G subfamily. As to quaternary structure, heterotrimer composed of an alpha, a beta and a gamma chain. It depends on Mg(2+) as a cofactor.

It carries out the reaction GTP + H2O = GDP + phosphate + H(+). Functionally, eIF-2 functions in the early steps of protein synthesis by forming a ternary complex with GTP and initiator tRNA. The polypeptide is Translation initiation factor 2 subunit gamma (Methanococcus vannielii (strain ATCC 35089 / DSM 1224 / JCM 13029 / OCM 148 / SB)).